A 128-amino-acid chain; its full sequence is Large ribosomal subunit protein bL17 (128 aa).

Belongs to the bacterial ribosomal protein bL17 family. Part of the 50S ribosomal subunit. Contacts protein L32.

The polypeptide is Large ribosomal subunit protein bL17 (Streptococcus sanguinis (strain SK36)).